The primary structure comprises 341 residues: Basic membrane protein B (341 aa).

The first 14 residues, 1–14 (MRIVIFILGILLTS), serve as a signal peptide directing secretion. Cys-15 is lipidated: N-palmitoyl cysteine. Cys-15 carries S-diacylglycerol cysteine lipidation.

It belongs to the BMP lipoprotein family. Monomer.

The protein localises to the cell inner membrane. Functionally, may be part of an ABC-type nucleoside uptake system involved in the purine salvage pathway. The sequence is that of Basic membrane protein B (bmpB) from Borrelia garinii subsp. bavariensis (strain ATCC BAA-2496 / DSM 23469 / PBi) (Borreliella bavariensis).